A 160-amino-acid chain; its full sequence is MAPLGVSGLVGKLSTELEVDCDAEKYYNMYKHGEDVKKAVPHLCVDVKIISGDPTSSGCIKEWNVNIDGKTIRSVEETTHDDETKTLRHRVFEGDVMKDFKKFDTIMVVNPKPDGNGCVVTRSIEYEKTNENSPTPFDYLQFGHQAIEDMNKYLRDSESN.

Serine 74 lines the thebaine pocket. Histidine 89 functions as the Proton acceptor in the catalytic mechanism. Residue threonine 105 coordinates thebaine.

The protein belongs to the MLP family. Homodimer (allosteric) and oligomers. In terms of tissue distribution, expressed in poppy latex.

It carries out the reaction (7S)-O-acetylsalutaridinol = thebaine + acetate + H(+). It functions in the pathway alkaloid biosynthesis; morphine biosynthesis. Slightly inhibited by salutaridine and (7S)-salutaridinol. In terms of biological role, catalyzes the formation of thebaine from (7S)-salutaridinol 7-O-acetate at the expense of labile hydroxylated by-products, which are preferentially produced by spontaneous allylic elimination. No visible activity toward (7S)-salutaridinol (at pH 7). The polypeptide is Thebaine synthase 2 (Papaver somniferum (Opium poppy)).